Here is a 179-residue protein sequence, read N- to C-terminus: Putative ankyrin repeat protein RF_0922 (179 aa).

ANK repeat units follow at residues 5–34, 40–72, 75–104, 110–139, and 145–174; these read KGCT…EQAI, NGST…INHV, NGNT…SQAI, NGDT…EQAI, and NGNT…KQAI.

In Rickettsia felis (strain ATCC VR-1525 / URRWXCal2) (Rickettsia azadi), this protein is Putative ankyrin repeat protein RF_0922.